The primary structure comprises 419 residues: Mitochondrial chaperone BCS1 (419 aa).

The Mitochondrial intermembrane segment spans residues 2–15 (PLSDFILALKDNPY). The helical transmembrane segment at 16–32 (FGAGFGLVGVGTALALA) threads the bilayer. The Mitochondrial matrix segment spans residues 33-419 (RKGVQLGLVA…AIHNAESLRR (387 aa)). The residue at position 181 (Tyr-181) is a Phosphotyrosine. Residue 230–237 (GPPGCGKS) participates in ATP binding.

The protein belongs to the AAA ATPase family. BCS1 subfamily. In terms of assembly, interacts with LETM1. Ubiquitous.

Its subcellular location is the mitochondrion inner membrane. The enzyme catalyses ATP + H2O = ADP + phosphate + H(+). Functionally, chaperone necessary for the incorporation of Rieske iron-sulfur protein UQCRFS1 into the mitochondrial respiratory chain complex III. Plays an important role in the maintenance of mitochondrial tubular networks, respiratory chain assembly and formation of the LETM1 complex. The chain is Mitochondrial chaperone BCS1 (BCS1L) from Homo sapiens (Human).